Here is an 870-residue protein sequence, read N- to C-terminus: Leucine--tRNA ligase (870 aa).

The 'HIGH' region signature appears at 55–65; sequence PYPSGTLHMGH. The 'KMSKS' region motif lies at 626–630; sequence KMSKS. Residue K629 coordinates ATP.

Belongs to the class-I aminoacyl-tRNA synthetase family.

Its subcellular location is the cytoplasm. It catalyses the reaction tRNA(Leu) + L-leucine + ATP = L-leucyl-tRNA(Leu) + AMP + diphosphate. The polypeptide is Leucine--tRNA ligase (Prochlorococcus marinus (strain SARG / CCMP1375 / SS120)).